The primary structure comprises 280 residues: Tryptophan synthase alpha chain (280 aa).

Active-site proton acceptor residues include Glu50 and Asp61.

This sequence belongs to the TrpA family. Tetramer of two alpha and two beta chains.

The enzyme catalyses (1S,2R)-1-C-(indol-3-yl)glycerol 3-phosphate + L-serine = D-glyceraldehyde 3-phosphate + L-tryptophan + H2O. Its pathway is amino-acid biosynthesis; L-tryptophan biosynthesis; L-tryptophan from chorismate: step 5/5. The alpha subunit is responsible for the aldol cleavage of indoleglycerol phosphate to indole and glyceraldehyde 3-phosphate. This is Tryptophan synthase alpha chain from Methylorubrum extorquens (strain CM4 / NCIMB 13688) (Methylobacterium extorquens).